An 884-amino-acid polypeptide reads, in one-letter code: MMPVAGLLLCVTAVLCTSALGAGPRLDNGKLYRYSYSTEVGLNRPTGSPGGNVGFRISSDVDINLAWRNPEIQDEQLLQVKISNIQVESAGKHSRKNNIFHGSSAESILGKVRLEALQRPFLVLWKMGKIRSLYAQKAEPATVKNLKRGVASMLMMQLKSGKMSEADASGKCLVEYKVNKHQVIRTKHLETCKSQETGFTTHSPVLGISGKCAAETVITLENGIIKSADAKETHVLSINARHKAATKVLSRQSLTLKAIEAGPAEVAGKDVAGVVKALDDKFLSVGVIVEKTKPKCKGCPNLMETWKAVRSQLEPNSLSKAEAPRSFLTLVHSLRKSSKSEILTVLQNCSKTALPQLVDAVTSAQTPSSLSAILEFLDFSKKDGLILQERFLYACGFASHPTESMLQSLLEVSQGKIGSTEIKESVVIIMGALLRKLCLKGACDLPAVLKVKELLLAGPDSTQEESEVQMYLLALKNALLPEGIPVLAKYAESEVGAYSTIAITALQRYDPALITAEVKKALNRIYHQNQRIYEKNVRAAAADVIMSSNPSYMEVKNLLLSIGHLPHEMNKYMLSKIQDVLRFQMPAYKLVRQVMKDMISHNYDRFSKTGSSSAYSGFMAETVDVTCTYNLDILYSGSGVLRRSNMNIYGQSNNALLHGLQVTIEAQGLESLIAATPDEGEEELESFAGMSALLFDVQLRPVTFFKGYSDLMSKMFSMSGDPINVVKGLILLTDHSQVIPLQSGLRASAEFQAGLSIDISGGMEFSLWYRESKTSVNNRGALVIIGNMTVDTDFVSAGVEVGFETEATLDFITTVQFSEYPFLVCMQMDKTTFPFRETVSKQEKLPTGQMFSRKRSRDQVVPGSEFPLHQENSNMCKKVFEPAW.

A signal peptide spans 1–21; the sequence is MMPVAGLLLCVTAVLCTSALG. In terms of domain architecture, Vitellogenin spans 26–660; the sequence is LDNGKLYRYS…QSNNALLHGL (635 aa). A disulfide bridge connects residues C172 and C192. N-linked (GlcNAc...) asparagine glycosylation is present at N348. Residues C438 and C443 are joined by a disulfide bond. An N-linked (GlcNAc...) asparagine glycan is attached at N787.

In terms of assembly, heterodimer; heterodimerizes with the protein disulfide isomerase. As to expression, highest expression in the proximal part of the anterior intestine. Lower expression in the distal part of the anterior intestine, in the posterior portion of the intestinal tube and liver. Very low expression levels in heart, brain, ovary, testis and kidney.

It localises to the endoplasmic reticulum. The protein localises to the golgi apparatus. The enzyme catalyses a 1,2-diacyl-sn-glycero-3-phosphocholine(in) = a 1,2-diacyl-sn-glycero-3-phosphocholine(out). It catalyses the reaction a 1,2-diacyl-sn-glycero-3-phosphoethanolamine(in) = a 1,2-diacyl-sn-glycero-3-phosphoethanolamine(out). The catalysed reaction is a cholesterol ester(in) = a cholesterol ester(out). It carries out the reaction a triacyl-sn-glycerol(in) = a triacyl-sn-glycerol(out). Its activity is regulated as follows. Inhibited by naringenin. Its function is as follows. Catalyzes the transport of triglyceride between phospholipid surfaces. Catalyzes the transport of cholesteryl ester, and phospholipid between phospholipid surfaces. Required for the assembly and secretion of plasma lipoproteins that contain apolipoprotein B. Required for yolk lipid utilization and absorption of dietary lipids in larvae. The polypeptide is Microsomal triglyceride transfer protein large subunit (Danio rerio (Zebrafish)).